The primary structure comprises 439 residues: Xylose isomerase (439 aa).

Residues His-101 and Asp-104 contribute to the active site. Mg(2+) is bound by residues Glu-232, Glu-268, His-271, Asp-296, Asp-307, Asp-309, and Asp-339.

It belongs to the xylose isomerase family. As to quaternary structure, homotetramer. It depends on Mg(2+) as a cofactor.

The protein localises to the cytoplasm. It carries out the reaction alpha-D-xylose = alpha-D-xylulofuranose. The protein is Xylose isomerase (xylA) of Thermoanaerobacterium thermosaccharolyticum (strain ATCC 7956 / DSM 571 / NCIMB 9385 / NCA 3814 / NCTC 13789 / WDCM 00135 / 2032) (Clostridium thermosaccharolyticum).